The sequence spans 229 residues: Type-5 uracil-DNA glycosylase (229 aa).

Residues Cys-19, Cys-22, Cys-123, and Cys-138 each contribute to the [4Fe-4S] cluster site.

Belongs to the uracil-DNA glycosylase (UDG) superfamily. Type 5 (UDGb) family.

DNA glycosylase with broad substrate specificity. The polypeptide is Type-5 uracil-DNA glycosylase (Mycobacterium leprae (strain TN)).